A 62-amino-acid polypeptide reads, in one-letter code: Ranacyclin-T (62 aa).

Positions 1–22 are cleaved as a signal peptide; that stretch reads MFTMKKTLLVLFFLGVVSLSLC. A propeptide spanning residues 23-43 is cleaved from the precursor; the sequence is VEERDADEEDGGEVMEEEVKR. Cys-49 and Cys-59 form a disulfide bridge. Lys-60 is modified (lysine amide).

This sequence belongs to the frog skin active peptide (FSAP) family. Brevinin subfamily. Expressed by the skin granular glands.

The protein localises to the secreted. Functionally, has antibacterial activity against Gram-positive bacteria B.megaterium Bm11, S.lentus and M.luteus, and Gram-negative bacteria E.coli D22, Y.pseudotuberculosis YP III and P.syringae pv tabaci, and antifungal activity against C.albicans ATCC 10231, C.tropicalis, C.guiller-mondii and P.nicotianae spores. Has weak hemolytic activity. The mature peptide inserts into the hydrophobic core of the bacterial cell membrane and increases permeability without disrupting membrane integrity. Probably binds to the outer membrane surface before aggregating to form transmembrane pores. The chain is Ranacyclin-T (RNCT) from Rana temporaria (European common frog).